A 110-amino-acid chain; its full sequence is Large ribosomal subunit protein uL22 (110 aa).

This sequence belongs to the universal ribosomal protein uL22 family. Part of the 50S ribosomal subunit.

Its function is as follows. This protein binds specifically to 23S rRNA; its binding is stimulated by other ribosomal proteins, e.g. L4, L17, and L20. It is important during the early stages of 50S assembly. It makes multiple contacts with different domains of the 23S rRNA in the assembled 50S subunit and ribosome. In terms of biological role, the globular domain of the protein is located near the polypeptide exit tunnel on the outside of the subunit, while an extended beta-hairpin is found that lines the wall of the exit tunnel in the center of the 70S ribosome. This Nitrosomonas europaea (strain ATCC 19718 / CIP 103999 / KCTC 2705 / NBRC 14298) protein is Large ribosomal subunit protein uL22.